The sequence spans 1665 residues: Cortactin-binding protein 2 (1665 aa).

Positions 120 to 277 (RKMQERMSTQ…EQLKRGNDSK (158 aa)) form a coiled coil. Disordered stretches follow at residues 203–222 (EKKK…RRST), 368–480 (VSSV…SPTS), and 500–620 (RFTS…PSID). Composition is skewed to polar residues over residues 388 to 399 (SIGSTPDLASST) and 410 to 429 (TGQT…SMHS). Residues 455 to 469 (QGNANDQDQNGNTTQ) show a composition bias toward low complexity. The segment covering 470–480 (SPPSRDVSPTS) has biased composition (polar residues). Arg-500 carries the post-translational modification Asymmetric dimethylarginine. ANK repeat units lie at residues 711-741 (GRPT…DINY), 745-774 (DGHS…QIDA), 778-807 (NGFT…NIDH), 811-840 (GGQT…DRSV), and 844-873 (DGWT…PTLG). Residues 875-902 (SLNEEEPEPGAFDLDQGQEGSEGTAKPV) are disordered. The stretch at 914 to 944 (EGWTAAHIAASKGFKNCLEILCRHGGLEPER) is one ANK 6 repeat. The segment at 1447-1495 (CSKKKGENGAWRKVSTNPRKKSGRFSSPTWSKPDLGEEGTKNKTMSQPN) is disordered. At Ser-1526 the chain carries Phosphoserine. Residues 1575–1665 (NNLRMPVSQK…KNEQVQKPNK (91 aa)) are disordered. 2 stretches are compositionally biased toward low complexity: residues 1590–1604 (SSHQ…TSKT) and 1623–1641 (SQCS…TRQT). Residues 1656-1665 (KNEQVQKPNK) show a composition bias toward polar residues.

In terms of assembly, interacts with CTTN/cortactin SH3 domain. Interacts with STRN, STRN4/zinedin and MOB4/phocein; this interactions mediate the association with the STRIPAK core complex and may regulate dendritic spine distribution of the STRIPAK complex in hippocampal neurons. Activation of glutamate receptors weakens the interaction with STRN and STRN4.

The protein resides in the cytoplasm. It localises to the cell cortex. The protein localises to the cell projection. It is found in the dendritic spine. Regulates the dendritic spine distribution of CTTN/cortactin in hippocampal neurons, and thus controls dendritic spinogenesis and dendritic spine maintenance. Associates with the striatin-interacting phosphatase and kinase (STRIPAK) core complex to regulate dendritic spine distribution of the STRIPAK complex in hippocampal neurons. The protein is Cortactin-binding protein 2 (CTTNBP2) of Dasypus novemcinctus (Nine-banded armadillo).